A 72-amino-acid polypeptide reads, in one-letter code: Metallothionein-like protein type 2 A (72 aa).

The protein belongs to the metallothionein superfamily. Type 15 family. As to expression, leaves and roots.

Metallothioneins have a high content of cysteine residues that bind various heavy metals. The sequence is that of Metallothionein-like protein type 2 A (MTA) from Solanum lycopersicum (Tomato).